Consider the following 105-residue polypeptide: Large ribosomal subunit protein uL24 (105 aa).

This sequence belongs to the universal ribosomal protein uL24 family. Part of the 50S ribosomal subunit.

One of two assembly initiator proteins, it binds directly to the 5'-end of the 23S rRNA, where it nucleates assembly of the 50S subunit. In terms of biological role, one of the proteins that surrounds the polypeptide exit tunnel on the outside of the subunit. The polypeptide is Large ribosomal subunit protein uL24 (Wolbachia pipientis wMel).